We begin with the raw amino-acid sequence, 266 residues long: Undecaprenyl-diphosphatase (266 aa).

8 consecutive transmembrane segments (helical) span residues 4–24 (LATIILLGIIEGLTEFLPVSS), 41–61 (GSAAFKIAIQLGAILAVLVAY), 79–99 (AVAFTRNILIGFLPAMLVGAV), 108–128 (LESPATVAVALLVGGIAILAI), 143–163 (MPLRTAIAIGAVQCIAMIPGV), 184–204 (AEFSFFLAVPTMMGATAYSLW), 220–240 (IGLFVAFLVALVVVKAFVAIV), and 243–263 (FGFAPFAWYRIIVGGGALLWL).

It belongs to the UppP family.

Its subcellular location is the cell inner membrane. It catalyses the reaction di-trans,octa-cis-undecaprenyl diphosphate + H2O = di-trans,octa-cis-undecaprenyl phosphate + phosphate + H(+). In terms of biological role, catalyzes the dephosphorylation of undecaprenyl diphosphate (UPP). Confers resistance to bacitracin. In Sphingopyxis alaskensis (strain DSM 13593 / LMG 18877 / RB2256) (Sphingomonas alaskensis), this protein is Undecaprenyl-diphosphatase.